The sequence spans 615 residues: 1-deoxy-D-xylulose-5-phosphate synthase (615 aa).

Thiamine diphosphate contacts are provided by residues His76 and 117–119; that span reads GHS. Asp148 is a Mg(2+) binding site. Residues 149–150, Asn177, Tyr284, and Glu365 each bind thiamine diphosphate; that span reads GA. Asn177 lines the Mg(2+) pocket.

This sequence belongs to the transketolase family. DXPS subfamily. Homodimer. It depends on Mg(2+) as a cofactor. The cofactor is thiamine diphosphate.

It carries out the reaction D-glyceraldehyde 3-phosphate + pyruvate + H(+) = 1-deoxy-D-xylulose 5-phosphate + CO2. It functions in the pathway metabolic intermediate biosynthesis; 1-deoxy-D-xylulose 5-phosphate biosynthesis; 1-deoxy-D-xylulose 5-phosphate from D-glyceraldehyde 3-phosphate and pyruvate: step 1/1. Catalyzes the acyloin condensation reaction between C atoms 2 and 3 of pyruvate and glyceraldehyde 3-phosphate to yield 1-deoxy-D-xylulose-5-phosphate (DXP). The sequence is that of 1-deoxy-D-xylulose-5-phosphate synthase from Francisella tularensis subsp. holarctica (strain FTNF002-00 / FTA).